A 462-amino-acid polypeptide reads, in one-letter code: Ribosomal oxygenase 2 (462 aa).

Positions 1-24 (MPKKARPAGDGKEQGPAPKQVKVE) are disordered. The region spanning 139–271 (QPQRFKDELW…SSWGDFLLDT (133 aa)) is the JmjC domain. Fe cation-binding residues include histidine 179, aspartate 181, and histidine 240. Residue serine 308 is modified to Phosphoserine.

This sequence belongs to the ROX family. MINA53 subfamily. Requires Fe(2+) as cofactor.

The protein localises to the nucleus. The protein resides in the nucleolus. The enzyme catalyses L-histidyl-[ribosomal protein uL15] + 2-oxoglutarate + O2 = (3S)-3-hydroxy-L-histidyl-[ribosomal protein uL15] + succinate + CO2. It catalyses the reaction L-histidyl-[protein] + 2-oxoglutarate + O2 = (3S)-3-hydroxy-L-histidyl-[protein] + succinate + CO2. Its function is as follows. Oxygenase that can act as both a histone lysine demethylase and a ribosomal histidine hydroxylase. Is involved in the demethylation of trimethylated 'Lys-9' on histone H3 (H3K9me3), leading to an increase in ribosomal RNA expression. Also catalyzes the hydroxylation of 60S ribosomal protein L27a on 'His-39'. May play an important role in cell growth and survival. May be involved in ribosome biogenesis, most likely during the assembly process of pre-ribosomal particles. This chain is Ribosomal oxygenase 2 (RIOX2), found in Bos taurus (Bovine).